Here is a 314-residue protein sequence, read N- to C-terminus: DNA-directed RNA polymerase subunit alpha (314 aa).

Residues M1 to N228 form an alpha N-terminal domain (alpha-NTD) region. Residues K245–D314 are alpha C-terminal domain (alpha-CTD).

The protein belongs to the RNA polymerase alpha chain family. As to quaternary structure, homodimer. The RNAP catalytic core consists of 2 alpha, 1 beta, 1 beta' and 1 omega subunit. When a sigma factor is associated with the core the holoenzyme is formed, which can initiate transcription.

It catalyses the reaction RNA(n) + a ribonucleoside 5'-triphosphate = RNA(n+1) + diphosphate. In terms of biological role, DNA-dependent RNA polymerase catalyzes the transcription of DNA into RNA using the four ribonucleoside triphosphates as substrates. The protein is DNA-directed RNA polymerase subunit alpha of Pediococcus pentosaceus (strain ATCC 25745 / CCUG 21536 / LMG 10740 / 183-1w).